A 154-amino-acid chain; its full sequence is Ribosomal RNA large subunit methyltransferase H (154 aa).

S-adenosyl-L-methionine is bound by residues Gly-103 and Phe-122–Phe-127.

Belongs to the RNA methyltransferase RlmH family. Homodimer.

It localises to the cytoplasm. The catalysed reaction is pseudouridine(1915) in 23S rRNA + S-adenosyl-L-methionine = N(3)-methylpseudouridine(1915) in 23S rRNA + S-adenosyl-L-homocysteine + H(+). Functionally, specifically methylates the pseudouridine at position 1915 (m3Psi1915) in 23S rRNA. This is Ribosomal RNA large subunit methyltransferase H from Caldicellulosiruptor bescii (strain ATCC BAA-1888 / DSM 6725 / KCTC 15123 / Z-1320) (Anaerocellum thermophilum).